We begin with the raw amino-acid sequence, 298 residues long: Troponin T, cardiac muscle (298 aa).

Residues 1–70 (MSDIEEVVEE…EAKEAEDGPM (70 aa)) show a composition bias toward acidic residues. Disordered stretches follow at residues 1-95 (MSDI…GERV) and 120-219 (FENR…EKKK). Serine 2 bears the N-acetylserine mark. At serine 2 the chain carries Phosphoserine; by CK2. 2 stretches are compositionally biased toward basic and acidic residues: residues 120-183 (FENR…DEAR) and 203-219 (QTER…EKKK). Threonine 204 carries the phosphothreonine; by PKC/PRKCA modification. Serine 208 is subject to Phosphoserine; by PKC/PRKCA. Threonine 213 is modified (phosphothreonine; by PKC/PRKCA and RAF1). A Phosphothreonine; by PKC/PRKCA modification is found at threonine 294.

The protein belongs to the troponin T family. In terms of processing, phosphorylation at Thr-213 by PRKCA induces significant reduction in myofilament calcium sensitivity and actomyosin ATPase activity. As to expression, heart. The fetal heart shows a greater expression in the atrium than in the ventricle, while the adult heart shows a greater expression in the ventricle than in the atrium. Isoform 6 predominates in normal adult heart. Isoforms 1, 7 and 8 are expressed in fetal heart. Isoform 7 is also expressed in failing adult heart.

Troponin T is the tropomyosin-binding subunit of troponin, the thin filament regulatory complex which confers calcium-sensitivity to striated muscle actomyosin ATPase activity. The protein is Troponin T, cardiac muscle (TNNT2) of Homo sapiens (Human).